The chain runs to 1385 residues: MTLDDLFTVRGSAANIANIRNLKAIQITIASPENIREWSYGEVKKPETINYRTFKPERDGLFCAKIFGPVKDYECNCGKYKRMKHRGIVCEKCGVEVIASKVRRERMGHIELAAPVAHIWFLKTLPSKIGTLLDMTMADLEKVLYFDSYIVLDPGSTNLTKMQVISEDQYLQVIDHYGEDALTVGMGAEAVRSLLEELNLEELRVQLREESQATKSQTKKKKLTKRLKIVEAFLESNNKPEWMVMEVIPVIPPELRPLVPLDGGRFATSDLNDLYRRVINRNNRLKRLMELGAPDIIIRNEKRMLQEAVDALFDNGRRGRAITGTNGRPLKSLSDMIKGKQGRFRQNLLGKRVDYSGRSVIVVGPKLKLHQCGLPKKMALELFKPFIYSELEKRGLASTIKSAKKMVEREELVVWDILEEVVREYPIMLNRAPTLHRLGIQSFEPLLVEGKAIQLHPLVCSAYNADFDGDQMAVHVPLSVEAQIECRVLMMSTNNILSPANGSPVIVPSQDIVLGLYYMTVDRSFEKGENMSFCAPWEVVAAYDAGVVALHARINVRMEDGKVVRTTVGRILVWELLPHCVPFSMVNTTLTKKNIARLVSTAYRDAGTKATVILCDRLKDVGYEYATRAGVTIAVKDLTIPSTKKGLIETAQNEVDDIERQYRDGIITRTEKYNKVVDVWTKATQDVSNEMIREISSDIVEDPRTGAKEANSSFNSIYMMSTSGARGNQDQMRQLAGMRGLMAKPSGEIIETPITSSFREGLSVLQYFTSTHGARKGLADTALKTANSGYLTRRLVDVVQDVIVSEHDCGTVDGIELTHIKEGGEIKIPLADRALGRVLLYPVYDPETRDLLFPENTLVDENVAKVLVEREVSSVMIRSALTCQSDRGICTLCYGRDLARGHIVNIGETVGIIAAQSIGEPGTQLTMRTFHIGGTASREIERSSFEAQHPGRVILSRVKAVRNRDGQYMVMGKSGQLAIVDDQGREREKYTLPNGSRLLVTEGEEIRKGQILAEWDPFNEPFVSEVDGVIRFSDIVEGKTFQEKMDEATRMTTQTIIEYRTTNFRPSISICDEHGEVKMRGNNIPATYSLPVGAIIMVKNGQDLQAGDIIARKPRETSKTKDIVGGLPRVAELFEVRKPKDMAVVSEIAGIVTYAGETKGKRKLVVTPEIGEAKEYLVPKGKHITVTDGDFVEAGDLLTEGHPELHDILRTRGEKYLARYLTDEIQEVYRFQGVAIDDKHIEVIVRQMLKKVTVLDPGGTTFLVGEQVDKGEFRVENTRAMGEGRTPATAEPLVLGITQASLTTSSFISAASFQETTKVLTEASLRGKMDYLRGLKENVIVGRLIPAGTGYREYVNTDILVPEQRERPDKFLEDLEENPLLVDIY.

Cysteine 75, cysteine 77, cysteine 90, and cysteine 93 together coordinate Zn(2+). Residues aspartate 466, aspartate 468, and aspartate 470 each coordinate Mg(2+). Cysteine 809, cysteine 883, cysteine 890, and cysteine 893 together coordinate Zn(2+).

This sequence belongs to the RNA polymerase beta' chain family. As to quaternary structure, the RNAP catalytic core consists of 2 alpha, 1 beta, 1 beta' and 1 omega subunit. When a sigma factor is associated with the core the holoenzyme is formed, which can initiate transcription. The cofactor is Mg(2+). Requires Zn(2+) as cofactor.

It catalyses the reaction RNA(n) + a ribonucleoside 5'-triphosphate = RNA(n+1) + diphosphate. DNA-dependent RNA polymerase catalyzes the transcription of DNA into RNA using the four ribonucleoside triphosphates as substrates. This Nitratidesulfovibrio vulgaris (strain ATCC 29579 / DSM 644 / CCUG 34227 / NCIMB 8303 / VKM B-1760 / Hildenborough) (Desulfovibrio vulgaris) protein is DNA-directed RNA polymerase subunit beta'.